We begin with the raw amino-acid sequence, 270 residues long: Phosphonates import ATP-binding protein PhnC 1 (270 aa).

The ABC transporter domain occupies 2–245 (LVVEGLTCRF…IARELYDLEA (244 aa)). An ATP-binding site is contributed by 34–41 (GRSGAGKS).

This sequence belongs to the ABC transporter superfamily. Phosphonates importer (TC 3.A.1.9.1) family. In terms of assembly, the complex is composed of two ATP-binding proteins (PhnC), two transmembrane proteins (PhnE) and a solute-binding protein (PhnD).

It localises to the cell inner membrane. It carries out the reaction phosphonate(out) + ATP + H2O = phosphonate(in) + ADP + phosphate + H(+). Functionally, part of the ABC transporter complex PhnCDE involved in phosphonates import. Responsible for energy coupling to the transport system. The sequence is that of Phosphonates import ATP-binding protein PhnC 1 from Rhodopseudomonas palustris (strain ATCC BAA-98 / CGA009).